Reading from the N-terminus, the 60-residue chain is SCLLLQFTDKRFQPVHDLTIGVEFGARGAAGALLVYDITRRTASNVEEAFINTAKEIYEK.

GTP-binding residues include serine 1, cysteine 2, and threonine 19. Serine 1 is a binding site for Mg(2+). An Effector region motif is present at residues 16–24; the sequence is HDLTIGVEF. Threonine 19 provides a ligand contact to Mg(2+).

It belongs to the small GTPase superfamily. Rab family. Interacts with PRKCI. Interacts with TRIP11. Interacts (in GTP-bound form) with GARIN1B. Interacts (GTP-bound) with HOPS complex component VPS39; interaction contributes to obtaining a functional HOPS complex that promotes autophagosome-lysosome membrane fusion driven by STX17-SNAP29-VAMP8. May interact with VPS41. Mg(2+) serves as cofactor. Prenylated. Prenylation is required for association with cellular membranes.

Its subcellular location is the endoplasmic reticulum-Golgi intermediate compartment membrane. It localises to the melanosome. The protein resides in the endoplasmic reticulum membrane. The protein localises to the golgi apparatus membrane. It is found in the cytoplasmic vesicle. Its subcellular location is the secretory vesicle. It localises to the acrosome. The protein resides in the autophagosome membrane. It catalyses the reaction GTP + H2O = GDP + phosphate + H(+). Its activity is regulated as follows. Regulated by guanine nucleotide exchange factors (GEFs) which promote the exchange of bound GDP for free GTP, GTPase activating proteins (GAPs) which increase the GTP hydrolysis activity, and GDP dissociation inhibitors (GDIs) which inhibit the dissociation of the nucleotide from the GTPase. Functionally, the small GTPases Rab are key regulators of intracellular membrane trafficking, from the formation of transport vesicles to their fusion with membranes. Rabs cycle between active GTP-bound and inactive GDP-bound states. In their active state, drive transport of vesicular carriers from donor organelles to acceptor organelles to regulate the membrane traffic that maintains organelle identity and morphology. RAB2A regulates autophagy by promoting autophagosome-lysosome fusion via recruitment of the HOPS endosomal tethering complex; this process involves autophagosomal RAB2A and lysosomal RAB39A recruitment of HOPS subcomplexes VPS39-VPS11 and VPS41-VPS16-VPS18-VPS33A, respectively, which assemble into a functional complex to mediate membrane tethering and SNAREs-driven membrane fusion. Required for protein transport from the endoplasmic reticulum to the Golgi complex. Regulates the compacted morphology of the Golgi. Together with RAB2B, redundantly required for efficient autophagic flux. The sequence is that of Ras-related protein Rab-2A from Mesocricetus auratus (Golden hamster).